Reading from the N-terminus, the 110-residue chain is uncharacterized protein (110 aa).

The tract at residues 1–72 (MWRSSNQRGV…NHRNIHLRNP (72 aa)) is disordered. The segment covering 10–23 (VSRRRDKSMRKYTR) has biased composition (basic residues). The segment covering 48–57 (KNTYTGNISS) has biased composition (polar residues).

This is an uncharacterized protein from Human herpesvirus 6A (strain Uganda-1102) (HHV-6 variant A).